The sequence spans 284 residues: L-ribulose-5-phosphate 3-epimerase UlaE (284 aa).

This sequence belongs to the L-ribulose-5-phosphate 3-epimerase family.

The enzyme catalyses L-ribulose 5-phosphate = L-xylulose 5-phosphate. It functions in the pathway cofactor degradation; L-ascorbate degradation; D-xylulose 5-phosphate from L-ascorbate: step 3/4. In terms of biological role, catalyzes the isomerization of L-xylulose-5-phosphate to L-ribulose-5-phosphate. Is involved in the anaerobic L-ascorbate utilization. The protein is L-ribulose-5-phosphate 3-epimerase UlaE of Escherichia coli O45:K1 (strain S88 / ExPEC).